The sequence spans 394 residues: MAREKFDRSKPHVNVGTIGHIDHGKTTLTAAICTVLAKEGKSAATRYDQIDKAPEEKARGITINSAHVEYSSDKRHYAHVDCPGHADYIKNMITGAAQMDGAILVVSATDSVMPQTREHILLARQVGVPRMVVFLNKCDIATDEEVQELVAEEVRDLLTSYGFDGKNTPIIYGSALKALEGDPKWEAKIHDLMNAVDEWIPTPEREVDKPFLLAIEDTMTITGRGTVVTGRVERGELKVGQEIEIVGLRPIRKAVVTGIEMFKKELDSAMAGDNAGVLLRGVDRKEVERGQVLAKPGSIKPHKKFKAEIYALKKEEGGRHTGFLNGYRPQFYFRTTDVTGSISLPENTEMVLPGDNTSITVELIAPIACEKGSKFSIREGGRTVGAGSVTEVLE.

Residues lysine 10–glutamate 204 form the tr-type G domain. Residues glycine 19–threonine 26 form a G1 region. A GTP-binding site is contributed by glycine 19 to threonine 26. Residue threonine 26 participates in Mg(2+) binding. The segment at glycine 60 to asparagine 64 is G2. The tract at residues aspartate 81–glycine 84 is G3. GTP-binding positions include aspartate 81–histidine 85 and asparagine 136–aspartate 139. The G4 stretch occupies residues asparagine 136 to aspartate 139. A G5 region spans residues serine 174–leucine 176.

Belongs to the TRAFAC class translation factor GTPase superfamily. Classic translation factor GTPase family. EF-Tu/EF-1A subfamily. In terms of assembly, monomer.

The protein resides in the cytoplasm. It catalyses the reaction GTP + H2O = GDP + phosphate + H(+). Its function is as follows. GTP hydrolase that promotes the GTP-dependent binding of aminoacyl-tRNA to the A-site of ribosomes during protein biosynthesis. The chain is Elongation factor Tu from Mycoplasma pneumoniae (strain ATCC 29342 / M129 / Subtype 1) (Mycoplasmoides pneumoniae).